Consider the following 187-residue polypeptide: Large ribosomal subunit protein uL22 (187 aa).

A disordered region spans residues 155-187 (DAVSRAAPTDDAPAKKKLSKKKLARQKEKMMRE). The segment covering 169 to 178 (KKKLSKKKLA) has biased composition (basic residues).

This sequence belongs to the universal ribosomal protein uL22 family.

The protein is Large ribosomal subunit protein uL22 (RpL17) of Lonomia obliqua (Moth).